Consider the following 57-residue polypeptide: Exactin (57 aa).

Cystine bridges form between Cys3/Cys19, Cys12/Cys37, Cys41/Cys49, and Cys50/Cys55.

The protein belongs to the three-finger toxin family. Short-chain subfamily. Orphan group XX sub-subfamily. As to expression, expressed by the venom gland.

Its subcellular location is the secreted. Anticoagulant protein that prevents the activation of factor X (F10). It acts by potently inhibiting the extrinsic tenase complex (ETC) (IC(50)=116.49 nM), a complex composed by active factor VII (F7a), tissue factor (TF) and F10. In addition, it shows weaker activities on other complexes. It weakly inhibits F10 activation by inhibiting the intrinsic tenase complex (IC(50)=4.05 uM), a complex composed by active factor IX (IXa, F9a), its cofactor factor VIII (VIIIa, F8a), and their substrate F10. It also weakly prevents prothrombin activation by inhibiting the prothrombinase complex (IC(50)=17.66 uM). It shows high kinetic constant towards F7a/TF/F10/phospholipids complex (Ki=30.62 nM) and lower kinetic constant towards F7a/TF/phospholipids complex (Ki=153.75 nM). This Hemachatus haemachatus (Rinkhals) protein is Exactin.